Reading from the N-terminus, the 121-residue chain is Putative RNase MJ0127 (121 aa).

Active-site residues include arginine 76 and histidine 81. An RX(4)HXY motif motif is present at residues 76 to 83; that stretch reads RDKLIHHY. Tyrosine 83 bears the O-di-AMP-tyrosine mark.

Belongs to the HepT RNase toxin family. As to quaternary structure, homodimer, probably forms a complex with cognate antitoxin MJ0128. Modified by cognate antitoxin MJ0128; probably at least 2 successive AMPylation events occur on Tyr-83.

Its function is as follows. Probable toxic component of a putative type VII toxin-antitoxin (TA) system, probably an RNase. Probably neutralized by cognate antitoxin MJ0128. Neutralization may be due to AMPylation by MJ0128. In Methanocaldococcus jannaschii (strain ATCC 43067 / DSM 2661 / JAL-1 / JCM 10045 / NBRC 100440) (Methanococcus jannaschii), this protein is Putative RNase MJ0127.